We begin with the raw amino-acid sequence, 556 residues long: 2-succinyl-5-enolpyruvyl-6-hydroxy-3-cyclohexene-1-carboxylate synthase (556 aa).

The protein belongs to the TPP enzyme family. MenD subfamily. Homodimer. Requires Mg(2+) as cofactor. The cofactor is Mn(2+). Thiamine diphosphate serves as cofactor.

It catalyses the reaction isochorismate + 2-oxoglutarate + H(+) = 5-enolpyruvoyl-6-hydroxy-2-succinyl-cyclohex-3-ene-1-carboxylate + CO2. It functions in the pathway quinol/quinone metabolism; 1,4-dihydroxy-2-naphthoate biosynthesis; 1,4-dihydroxy-2-naphthoate from chorismate: step 2/7. Its pathway is quinol/quinone metabolism; menaquinone biosynthesis. Functionally, catalyzes the thiamine diphosphate-dependent decarboxylation of 2-oxoglutarate and the subsequent addition of the resulting succinic semialdehyde-thiamine pyrophosphate anion to isochorismate to yield 2-succinyl-5-enolpyruvyl-6-hydroxy-3-cyclohexene-1-carboxylate (SEPHCHC). This is 2-succinyl-5-enolpyruvyl-6-hydroxy-3-cyclohexene-1-carboxylate synthase from Salmonella choleraesuis (strain SC-B67).